Here is a 625-residue protein sequence, read N- to C-terminus: Mesothelin (625 aa).

Positions 1-35 (MALPTAQPLLGSCGSPICSRSFLLLLLSLGWLPLL) are cleaved as a signal peptide. Ser-202 carries the phosphoserine modification. Cys-304 and Cys-328 are joined by a disulfide. N-linked (GlcNAc...) asparagine glycosylation is found at Asn-390, Asn-488, and Asn-517. A lipid anchor (GPI-anchor amidated serine) is attached at Ser-600. Positions 601–625 (SGAPLLGPGFVFAWIPALLSALRLS) are cleaved as a propeptide — removed in mature form.

This sequence belongs to the mesothelin family. As to quaternary structure, interacts with MUC16. In terms of processing, proteolytically cleaved by a furin-like convertase to generate megakaryocyte-potentiating factor (MPF), and the cleaved form of mesothelin. In terms of tissue distribution, specifically expressed in lung. Overexpressed in hereditary renal carcinoma developed by Eker rats.

The protein resides in the cell membrane. It localises to the golgi apparatus. Its subcellular location is the secreted. Functionally, membrane-anchored forms may play a role in cellular adhesion. In terms of biological role, megakaryocyte-potentiating factor (MPF) may potentiate megakaryocyte colony formation. This Rattus norvegicus (Rat) protein is Mesothelin (Msln).